A 226-amino-acid polypeptide reads, in one-letter code: Cytidylate kinase (226 aa).

10-18 is an ATP binding site; sequence GPASSGKST.

This sequence belongs to the cytidylate kinase family. Type 1 subfamily.

The protein resides in the cytoplasm. The catalysed reaction is CMP + ATP = CDP + ADP. It carries out the reaction dCMP + ATP = dCDP + ADP. The polypeptide is Cytidylate kinase (Streptococcus pyogenes serotype M1).